Reading from the N-terminus, the 106-residue chain is Tapetal oleosin GRP-19 (106 aa).

The next 3 helical transmembrane spans lie at alanine 14–isoleucine 34, proline 37–alanine 57, and serine 58–tyrosine 78. Residues arginine 84–valine 106 are disordered.

This sequence belongs to the oleosin family. Proteolytically cleaved following anther tapetal breakdown. As to expression, present in pollen (at protein level). Inflorescence-specific expression, especially in flowers florets.

The protein resides in the secreted. It localises to the extracellular space. It is found in the extracellular matrix. The protein localises to the pollen coat. Its subcellular location is the lipid droplet. The protein resides in the membrane. Functionally, lipid-binding oleosin involved in anther tapetum development, especially for the physiology of tapetosomes. Also implicated in the formation of pollen coat. This is Tapetal oleosin GRP-19 from Arabidopsis thaliana (Mouse-ear cress).